The primary structure comprises 273 residues: Large ribosomal subunit protein uL2 (273 aa).

Residues 221–263 (RGTAMNPVDHPHGGGEGRNFGKHPVSPWGLQTKGKKTRKNKRT) are disordered. Residues 253 to 263 (KGKKTRKNKRT) are compositionally biased toward basic residues.

Belongs to the universal ribosomal protein uL2 family. In terms of assembly, part of the 50S ribosomal subunit. Forms a bridge to the 30S subunit in the 70S ribosome.

In terms of biological role, one of the primary rRNA binding proteins. Required for association of the 30S and 50S subunits to form the 70S ribosome, for tRNA binding and peptide bond formation. It has been suggested to have peptidyltransferase activity; this is somewhat controversial. Makes several contacts with the 16S rRNA in the 70S ribosome. The polypeptide is Large ribosomal subunit protein uL2 (Buchnera aphidicola subsp. Baizongia pistaciae (strain Bp)).